We begin with the raw amino-acid sequence, 21 residues long: Testis ecdysiotropin peptide 1 (21 aa).

The tract at residues 1–21 (ISDFDEYEPLNDADNNEVLDF) is disordered.

Its function is as follows. Start or boost ecdysteroid synthesis in testis of larvae and pupae. The protein is Testis ecdysiotropin peptide 1 of Lymantria dispar (Gypsy moth).